The primary structure comprises 494 residues: uncharacterized protein (494 aa).

Belongs to the TPP enzyme family.

This is an uncharacterized protein from Methanocaldococcus jannaschii (strain ATCC 43067 / DSM 2661 / JAL-1 / JCM 10045 / NBRC 100440) (Methanococcus jannaschii).